A 54-amino-acid chain; its full sequence is Large ribosomal subunit protein bL33B (54 aa).

The protein belongs to the bacterial ribosomal protein bL33 family.

The sequence is that of Large ribosomal subunit protein bL33B from Mycobacterium sp. (strain JLS).